The following is a 495-amino-acid chain: UDP-N-acetylmuramoyl-L-alanyl-D-glutamate--2,6-diaminopimelate ligase (495 aa).

Ser29 contacts UDP-N-acetyl-alpha-D-muramoyl-L-alanyl-D-glutamate. Residue 111-117 (GTNGKTS) coordinates ATP. Residues 153 to 154 (TT), Ser180, Gln186, and Arg188 each bind UDP-N-acetyl-alpha-D-muramoyl-L-alanyl-D-glutamate. N6-carboxylysine is present on Lys220. Meso-2,6-diaminopimelate contacts are provided by residues Arg384, 408–411 (DNPR), Gly459, and Glu463. Positions 408–411 (DNPR) match the Meso-diaminopimelate recognition motif motif.

It belongs to the MurCDEF family. MurE subfamily. The cofactor is Mg(2+). Carboxylation is probably crucial for Mg(2+) binding and, consequently, for the gamma-phosphate positioning of ATP.

The protein localises to the cytoplasm. The catalysed reaction is UDP-N-acetyl-alpha-D-muramoyl-L-alanyl-D-glutamate + meso-2,6-diaminopimelate + ATP = UDP-N-acetyl-alpha-D-muramoyl-L-alanyl-gamma-D-glutamyl-meso-2,6-diaminopimelate + ADP + phosphate + H(+). Its pathway is cell wall biogenesis; peptidoglycan biosynthesis. Catalyzes the addition of meso-diaminopimelic acid to the nucleotide precursor UDP-N-acetylmuramoyl-L-alanyl-D-glutamate (UMAG) in the biosynthesis of bacterial cell-wall peptidoglycan. The sequence is that of UDP-N-acetylmuramoyl-L-alanyl-D-glutamate--2,6-diaminopimelate ligase from Xanthomonas oryzae pv. oryzae (strain MAFF 311018).